The sequence spans 134 residues: Arsenate reductase (134 aa).

Active-site nucleophile residues include cysteine 11, cysteine 83, and cysteine 90. 2 disulfide bridges follow: cysteine 11–cysteine 83 and cysteine 83–cysteine 90.

It belongs to the low molecular weight phosphotyrosine protein phosphatase family. Thioredoxin-coupled ArsC subfamily.

Its subcellular location is the cytoplasm. It catalyses the reaction arsenate + [thioredoxin]-dithiol + H(+) = arsenite + [thioredoxin]-disulfide + H2O. Its function is as follows. Catalyzes the reduction of arsenate [As(V)] to arsenite [As(III)]. The chain is Arsenate reductase from Bacillus cereus (strain 03BB102).